We begin with the raw amino-acid sequence, 97 residues long: Aspartyl/glutamyl-tRNA(Asn/Gln) amidotransferase subunit C (97 aa).

Belongs to the GatC family. As to quaternary structure, heterotrimer of A, B and C subunits.

The enzyme catalyses L-glutamyl-tRNA(Gln) + L-glutamine + ATP + H2O = L-glutaminyl-tRNA(Gln) + L-glutamate + ADP + phosphate + H(+). It carries out the reaction L-aspartyl-tRNA(Asn) + L-glutamine + ATP + H2O = L-asparaginyl-tRNA(Asn) + L-glutamate + ADP + phosphate + 2 H(+). In terms of biological role, allows the formation of correctly charged Asn-tRNA(Asn) or Gln-tRNA(Gln) through the transamidation of misacylated Asp-tRNA(Asn) or Glu-tRNA(Gln) in organisms which lack either or both of asparaginyl-tRNA or glutaminyl-tRNA synthetases. The reaction takes place in the presence of glutamine and ATP through an activated phospho-Asp-tRNA(Asn) or phospho-Glu-tRNA(Gln). This chain is Aspartyl/glutamyl-tRNA(Asn/Gln) amidotransferase subunit C, found in Prochlorococcus marinus (strain MIT 9515).